We begin with the raw amino-acid sequence, 266 residues long: Vitamin B12-binding protein (266 aa).

The first 22 residues, 1 to 22, serve as a signal peptide directing secretion; it reads MAKSLFRALVALSFLAPLWLNA. Residues 25-266 form the Fe/B12 periplasmic-binding domain; sequence RVITLSPANT…QLCNALSQVD (242 aa). Cyanocob(III)alamin is bound by residues Y50 and 242–246; that span reads DWFER. C183 and C259 form a disulfide bridge.

It belongs to the BtuF family. As to quaternary structure, the complex is composed of two ATP-binding proteins (BtuD), two transmembrane proteins (BtuC) and a solute-binding protein (BtuF).

It is found in the periplasm. Its function is as follows. Part of the ABC transporter complex BtuCDF involved in vitamin B12 import. Binds vitamin B12 and delivers it to the periplasmic surface of BtuC. This is Vitamin B12-binding protein from Escherichia coli O6:H1 (strain CFT073 / ATCC 700928 / UPEC).